We begin with the raw amino-acid sequence, 772 residues long: Major capsid protein (772 aa).

A disordered region spans residues G593–Q772. Residues N654 to G664 show a composition bias toward gly residues. Pro residues predominate over residues P716 to S742. The segment covering D743–A766 has biased composition (low complexity).

The protein belongs to the totivirus major capsid protein family.

Its subcellular location is the virion. Functionally, capsid protein self-assembles to form an icosahedral capsid with a T=2 symmetry, 40 nm in diameter, and consisting of 60 capsid proteins asymmetric dimers. The capsid encapsulates the genomic dsRNA and the polymerase and remains intact following cell entry to protect the dsRNA from degradation and to prevent unfavorable antiviral responses in the host cell during all the replication cycle of the virus. Nascent transcripts are transcribed within the structural confines of the virion and are extruded into the cytoplasm. Binds and removes 5' cap structures from cellular mRNA. This chain is Major capsid protein, found in Helminthosporium victoriae virus-190S (Hv190SV).